The chain runs to 433 residues: uncharacterized protein (433 aa).

This sequence belongs to the arrestin family.

This is an uncharacterized protein from Schizosaccharomyces pombe (strain 972 / ATCC 24843) (Fission yeast).